We begin with the raw amino-acid sequence, 140 residues long: Cytochrome c-type biogenesis protein CcmE (140 aa).

At Met-1–Arg-7 the chain is on the cytoplasmic side. Residues Leu-8 to Glu-28 form a helical; Signal-anchor for type II membrane protein membrane-spanning segment. Topologically, residues Leu-29 to Lys-140 are periplasmic. The heme site is built by His-121 and Tyr-125.

The protein belongs to the CcmE/CycJ family.

It is found in the cell inner membrane. In terms of biological role, heme chaperone required for the biogenesis of c-type cytochromes. Transiently binds heme delivered by CcmC and transfers the heme to apo-cytochromes in a process facilitated by CcmF and CcmH. This is Cytochrome c-type biogenesis protein CcmE from Anaplasma marginale (strain St. Maries).